The chain runs to 521 residues: Bifunctional dihydrofolate reductase-thymidylate synthase (521 aa).

Positions 17-194 constitute a DHFR domain; that stretch reads NYQVVVAGTR…IRHSFVSFVR (178 aa). Valine 21 is a substrate binding site. Residues alanine 23 and 29–35 each bind NADP(+); that span reads GIGKDGV. Aspartate 43 contacts substrate. NADP(+) contacts are provided by residues 67–69 and 88–91; these read RKT and LTRS. Residue isoleucine 130 participates in substrate binding. An NADP(+)-binding site is contributed by 131 to 138; sequence GGGQVLRE. Threonine 151 is a binding site for substrate. Residues 197–521 form a thymidylate synthase region; it reads KSVAETHESN…HQKIEMKMAV (325 aa). Arginine 258 serves as a coordination point for dUMP. Residue cysteine 403 is part of the active site. Residues histidine 404, 422–426, asparagine 434, and 464–466 each bind dUMP; these read QRSAD and HVY.

It in the N-terminal section; belongs to the dihydrofolate reductase family. This sequence in the C-terminal section; belongs to the thymidylate synthase family.

The catalysed reaction is (6S)-5,6,7,8-tetrahydrofolate + NADP(+) = 7,8-dihydrofolate + NADPH + H(+). It carries out the reaction dUMP + (6R)-5,10-methylene-5,6,7,8-tetrahydrofolate = 7,8-dihydrofolate + dTMP. It functions in the pathway cofactor biosynthesis; tetrahydrofolate biosynthesis; 5,6,7,8-tetrahydrofolate from 7,8-dihydrofolate: step 1/1. Its function is as follows. Bifunctional enzyme. Involved in de novo dTMP biosynthesis. Key enzyme in folate metabolism. Can play two different roles depending on the source of dihydrofolate: de novo synthesis of tetrahydrofolate or recycling of the dihydrofolate released as one of the end products of the TS catalyzed reaction. Catalyzes an essential reaction for de novo glycine and purine synthesis, DNA precursor synthesis, and for the conversion of dUMP to dTMP. The polypeptide is Bifunctional dihydrofolate reductase-thymidylate synthase (DRTS) (Zea mays (Maize)).